A 359-amino-acid chain; its full sequence is Phosphoserine aminotransferase (359 aa).

L-glutamate is bound by residues serine 9 and arginine 42. Pyridoxal 5'-phosphate is bound by residues 76-77 (AS), tryptophan 102, threonine 152, aspartate 171, and glutamine 194. Position 195 is an N6-(pyridoxal phosphate)lysine (lysine 195). 236 to 237 (NT) provides a ligand contact to pyridoxal 5'-phosphate.

This sequence belongs to the class-V pyridoxal-phosphate-dependent aminotransferase family. SerC subfamily. Homodimer. Pyridoxal 5'-phosphate is required as a cofactor.

The protein resides in the cytoplasm. It catalyses the reaction O-phospho-L-serine + 2-oxoglutarate = 3-phosphooxypyruvate + L-glutamate. The enzyme catalyses 4-(phosphooxy)-L-threonine + 2-oxoglutarate = (R)-3-hydroxy-2-oxo-4-phosphooxybutanoate + L-glutamate. The protein operates within amino-acid biosynthesis; L-serine biosynthesis; L-serine from 3-phospho-D-glycerate: step 2/3. It participates in cofactor biosynthesis; pyridoxine 5'-phosphate biosynthesis; pyridoxine 5'-phosphate from D-erythrose 4-phosphate: step 3/5. Catalyzes the reversible conversion of 3-phosphohydroxypyruvate to phosphoserine and of 3-hydroxy-2-oxo-4-phosphonooxybutanoate to phosphohydroxythreonine. In Marinomonas sp. (strain MWYL1), this protein is Phosphoserine aminotransferase.